Reading from the N-terminus, the 737-residue chain is Elongation factor 2 (737 aa).

One can recognise a tr-type G domain in the interval 18 to 262; the sequence is TRVRNIGIIA…TVIKFVPNPR (245 aa). Residues 27–34, 93–97, and 147–150 contribute to the GTP site; these read AHVDHGKT, DTPGH, and NKVD. The residue at position 604 (His-604) is a Diphthamide.

Belongs to the TRAFAC class translation factor GTPase superfamily. Classic translation factor GTPase family. EF-G/EF-2 subfamily.

The protein resides in the cytoplasm. Its function is as follows. Catalyzes the GTP-dependent ribosomal translocation step during translation elongation. During this step, the ribosome changes from the pre-translocational (PRE) to the post-translocational (POST) state as the newly formed A-site-bound peptidyl-tRNA and P-site-bound deacylated tRNA move to the P and E sites, respectively. Catalyzes the coordinated movement of the two tRNA molecules, the mRNA and conformational changes in the ribosome. This chain is Elongation factor 2 (fusA), found in Sulfurisphaera tokodaii (strain DSM 16993 / JCM 10545 / NBRC 100140 / 7) (Sulfolobus tokodaii).